We begin with the raw amino-acid sequence, 75 residues long: Large ribosomal subunit protein uL24c (75 aa).

Belongs to the universal ribosomal protein uL24 family. In terms of assembly, part of the 50S ribosomal subunit.

Its subcellular location is the plastid. The protein localises to the chloroplast. One of two assembly initiator proteins, it binds directly to the 5'-end of the 23S rRNA, where it nucleates assembly of the 50S subunit. The sequence is that of Large ribosomal subunit protein uL24c (rpl24) from Cyanidioschyzon merolae (strain NIES-3377 / 10D) (Unicellular red alga).